We begin with the raw amino-acid sequence, 180 residues long: CASP-like protein 2D1 (180 aa).

Residues 1 to 7 (MAASGLK) are Cytoplasmic-facing. A helical transmembrane segment spans residues 8 to 28 (VPEMALRVCVVPLALASLWEM). Residues 29–48 (ATNAQADDTYGEVKFSDLSG) lie on the Extracellular side of the membrane. The chain crosses the membrane as a helical span at residues 49 to 69 (FSYLVGVNAVTAAYALVSILL). At 70–79 (SSLKPLARYD) the chain is on the cytoplasmic side. Residues 80–100 (WVILVMDQASAYLLVTSASAA) form a helical membrane-spanning segment. Topologically, residues 101–129 (AELLQLARRGDREVSWGEVCSYFGRFCGK) are extracellular. The chain crosses the membrane as a helical span at residues 130-150 (ATVSLALHAAALACFVALALV). Topologically, residues 151–180 (SAFRVLSTTGSSCHPPKHAQAQEHEQGRYN) are cytoplasmic. The segment at 161–180 (SSCHPPKHAQAQEHEQGRYN) is disordered. Positions 170–180 (QAQEHEQGRYN) are enriched in basic and acidic residues.

This sequence belongs to the Casparian strip membrane proteins (CASP) family. Homodimer and heterodimers.

It localises to the cell membrane. This Sorghum bicolor (Sorghum) protein is CASP-like protein 2D1.